Consider the following 508-residue polypeptide: Small ribosomal subunit protein mS47 (508 aa).

This sequence belongs to the enoyl-CoA hydratase/isomerase family. Mitochondrion-specific ribosomal protein mS47 subfamily. Component of the mitochondrial small ribosomal subunit (mt-SSU). Mature N.crassa 74S mitochondrial ribosomes consist of a small (37S) and a large (54S) subunit. The 37S small subunit contains a 16S ribosomal RNA (16S mt-rRNA) and 32 different proteins. The 54S large subunit contains a 23S rRNA (23S mt-rRNA) and 42 different proteins. mS47 forms a protuberance of the N.crassa mitoribosome and retains a solvent-exposed cavity liekly capable of accommodating a substrate, in accordance with it being an active enzyme as well as an integral constituent of the mitoribosome.

The protein resides in the mitochondrion. It carries out the reaction 3-hydroxy-2-methylpropanoyl-CoA + H2O = 3-hydroxy-2-methylpropanoate + CoA + H(+). Component of the mitochondrial ribosome (mitoribosome), a dedicated translation machinery responsible for the synthesis of mitochondrial genome-encoded proteins, including at least some of the essential transmembrane subunits of the mitochondrial respiratory chain. The mitoribosomes are attached to the mitochondrial inner membrane and translation products are cotranslationally integrated into the membrane. mS47 has enzymatic activity in vitro, and is able to catalyze the specific hydrolysis of 3-hydroxyisobutyryl-CoA (HIBYL-CoA). However, because the turnover rate of mS47 is only a fraction of that of the homologous mammalian enzyme, the physiological function of this activity remains unclear. The protein is Small ribosomal subunit protein mS47 (ehd3) of Neurospora crassa (strain ATCC 24698 / 74-OR23-1A / CBS 708.71 / DSM 1257 / FGSC 987).